The primary structure comprises 466 residues: Asparagine--tRNA ligase (466 aa).

This sequence belongs to the class-II aminoacyl-tRNA synthetase family. Homodimer.

The protein resides in the cytoplasm. The catalysed reaction is tRNA(Asn) + L-asparagine + ATP = L-asparaginyl-tRNA(Asn) + AMP + diphosphate + H(+). The chain is Asparagine--tRNA ligase from Colwellia psychrerythraea (strain 34H / ATCC BAA-681) (Vibrio psychroerythus).